The chain runs to 205 residues: ATP phosphoribosyltransferase (205 aa).

The protein belongs to the ATP phosphoribosyltransferase family. Short subfamily. Heteromultimer composed of HisG and HisZ subunits.

The protein localises to the cytoplasm. The catalysed reaction is 1-(5-phospho-beta-D-ribosyl)-ATP + diphosphate = 5-phospho-alpha-D-ribose 1-diphosphate + ATP. It functions in the pathway amino-acid biosynthesis; L-histidine biosynthesis; L-histidine from 5-phospho-alpha-D-ribose 1-diphosphate: step 1/9. Functionally, catalyzes the condensation of ATP and 5-phosphoribose 1-diphosphate to form N'-(5'-phosphoribosyl)-ATP (PR-ATP). Has a crucial role in the pathway because the rate of histidine biosynthesis seems to be controlled primarily by regulation of HisG enzymatic activity. The chain is ATP phosphoribosyltransferase from Leptospira interrogans serogroup Icterohaemorrhagiae serovar Lai (strain 56601).